The primary structure comprises 228 residues: L-ribulose-5-phosphate 4-epimerase UlaF (228 aa).

Substrate-binding positions include 26–27 (GN), 43–44 (SG), and 72–73 (SS). 3 residues coordinate Zn(2+): aspartate 74, histidine 93, and histidine 95. The active-site Proton donor/acceptor is the aspartate 118. A Zn(2+)-binding site is contributed by histidine 167. Catalysis depends on tyrosine 225, which acts as the Proton donor/acceptor.

The protein belongs to the aldolase class II family. AraD/FucA subfamily. Requires Zn(2+) as cofactor.

It catalyses the reaction L-ribulose 5-phosphate = D-xylulose 5-phosphate. Its pathway is cofactor degradation; L-ascorbate degradation; D-xylulose 5-phosphate from L-ascorbate: step 4/4. Catalyzes the isomerization of L-ribulose 5-phosphate to D-xylulose 5-phosphate. Is involved in the anaerobic L-ascorbate utilization. In Salmonella paratyphi B (strain ATCC BAA-1250 / SPB7), this protein is L-ribulose-5-phosphate 4-epimerase UlaF.